We begin with the raw amino-acid sequence, 405 residues long: Plasma serine protease inhibitor (405 aa).

The first 19 residues, 1-19 (MRFFPILCLVLFISHGVAS), serve as a signal peptide directing secretion. A propeptide spans 20–24 (RRHSH) (removed in mature form). N-linked (GlcNAc...) asparagine glycosylation occurs at asparagine 247.

Belongs to the serpin family. In terms of assembly, forms protease inhibiting heterodimers in extracellular body fluids with serine proteases such as activated protein C/coagulation factor V/F5, acrosin/ACR, chymotrypsinogen B/CTRB1, prothrombin/F2, factor Xa/F10, factor XI/F11, kallikrein/KLKB1, tissue kallikrein, trypsin/PRSS1, prostate specific antigen/KLK3, tissue plasminogen activator/PLAT and urinary plasminogen activator/PLAU. Forms membrane-anchored serine proteases inhibiting heterodimers with TMPRSS7 and TMPRSS11E. Interacts with SEMG2. Post-translationally, N-glycosylated; glycans consist of a mixture of sialylated bi- (including sialyl-Lewis X epitopes), tri- and tetra-antennary complex-type chains; affects the maximal heparin- and thrombomodulin-enhanced rates of thrombin inhibition. O-glycosylated; further modified with 2 sialic acid residues. Proteolytically cleaved at the N-terminus; inhibits slightly the heparin- and thrombomodulin-enhanced rates of thrombin inhibition. Proteolytically cleaved. Inhibition of proteases is accompanied by formation of a stable enzyme-inhibitor complex and by degradation of the serpin to lower molecular weight derivatives. As to expression, not detected in blood plasma (at protein level). Expressed in testis, epididymis, seminal vesicles, prostate and ovaries.

It is found in the secreted. It localises to the extracellular space. Its activity is regulated as follows. Its inhibitory activity is greatly enhanced in the presence of glycosaminoglycans, heparin, thrombomodulin and phospholipids vesicles. Its function is as follows. Heparin-dependent serine protease inhibitor acting in body fluids and secretions. Inactivates serine proteases by binding irreversibly to their serine activation site. Involved in the regulation of intravascular and extravascular proteolytic activities. Plays hemostatic roles in the blood plasma. Acts as a procoagulant and pro-inflammatory factor by inhibiting the anticoagulant activated protein C factor as well as the generation of activated protein C factor by the thrombin/thrombomodulin complex. Acts as an anticoagulant factor by inhibiting blood coagulation factors like prothrombin, factor XI, factor Xa, plasma kallikrein and fibrinolytic enzymes such as tissue- and urinary-type plasminogen activators. In seminal plasma, inactivates several serine proteases implicated in the reproductive system. Inhibits the serpin acrosin; indirectly protects component of the male genital tract from being degraded by excessive released acrosin. Inhibits tissue- and urinary-type plasminogen activator, prostate-specific antigen and kallikrein activities; has a control on the sperm motility and fertilization. Inhibits the activated protein C-catalyzed degradation of SEMG1 and SEMG2; regulates the degradation of semenogelin during the process of transfer of spermatozoa from the male reproductive tract into the female tract. In urine, inhibits urinary-type plasminogen activator and kallikrein activities. Inactivates membrane-anchored serine proteases activities such as MPRSS7 and TMPRSS11E. Inhibits urinary-type plasminogen activator-dependent tumor cell invasion and metastasis. May also play a non-inhibitory role in seminal plasma and urine as a hydrophobic hormone carrier by its binding to retinoic acid. The polypeptide is Plasma serine protease inhibitor (Serpina5) (Mus musculus (Mouse)).